A 290-amino-acid chain; its full sequence is 4-hydroxybenzoate octaprenyltransferase (290 aa).

The next 6 membrane-spanning stretches (helical) occupy residues 33–53 (LWAL…AVFV), 99–119 (LFVI…VKTI), 141–161 (LPQV…FCAV), 213–233 (LIIG…GWLN), 234–254 (GLGA…IWQQ), and 268–288 (AFLN…LSYL).

The protein belongs to the UbiA prenyltransferase family. It depends on Mg(2+) as a cofactor.

Its subcellular location is the cell inner membrane. It catalyses the reaction all-trans-octaprenyl diphosphate + 4-hydroxybenzoate = 4-hydroxy-3-(all-trans-octaprenyl)benzoate + diphosphate. It functions in the pathway cofactor biosynthesis; ubiquinone biosynthesis. Its function is as follows. Catalyzes the prenylation of para-hydroxybenzoate (PHB) with an all-trans polyprenyl group. Mediates the second step in the final reaction sequence of ubiquinone-8 (UQ-8) biosynthesis, which is the condensation of the polyisoprenoid side chain with PHB, generating the first membrane-bound Q intermediate 3-octaprenyl-4-hydroxybenzoate. The polypeptide is 4-hydroxybenzoate octaprenyltransferase (Cronobacter sakazakii (strain ATCC BAA-894) (Enterobacter sakazakii)).